The chain runs to 230 residues: NAD(P)H-hydrate epimerase (230 aa).

Positions 11–218 (AIDVDQELFT…ALQRKYGLNL (208 aa)) constitute a YjeF N-terminal domain. 61-65 (NNGGD) contacts (6S)-NADPHX. Positions 62 and 126 each coordinate K(+). (6S)-NADPHX contacts are provided by residues 130–136 (GFSFKPP) and D159. S162 provides a ligand contact to K(+).

The protein belongs to the NnrE/AIBP family. K(+) is required as a cofactor.

The catalysed reaction is (6R)-NADHX = (6S)-NADHX. It catalyses the reaction (6R)-NADPHX = (6S)-NADPHX. Its function is as follows. Catalyzes the epimerization of the S- and R-forms of NAD(P)HX, a damaged form of NAD(P)H that is a result of enzymatic or heat-dependent hydration. This is a prerequisite for the S-specific NAD(P)H-hydrate dehydratase to allow the repair of both epimers of NAD(P)HX. In Drosophila yakuba (Fruit fly), this protein is NAD(P)H-hydrate epimerase.